A 435-amino-acid chain; its full sequence is Trigger factor (435 aa).

The PPIase FKBP-type domain maps to 162–247 (GDRINIDYRG…LSGVESSKLP (86 aa)).

It belongs to the FKBP-type PPIase family. Tig subfamily.

It is found in the cytoplasm. The catalysed reaction is [protein]-peptidylproline (omega=180) = [protein]-peptidylproline (omega=0). Involved in protein export. Acts as a chaperone by maintaining the newly synthesized protein in an open conformation. Functions as a peptidyl-prolyl cis-trans isomerase. The chain is Trigger factor from Nitrosospira multiformis (strain ATCC 25196 / NCIMB 11849 / C 71).